The chain runs to 416 residues: Hemagglutinin-esterase (416 aa).

Positions 1–14 are cleaved as a signal peptide; that stretch reads MLSLILFFPSFAFA. Residues 4–121 are esterase domain first part; the sequence is LILFFPSFAF…GVDSYMELKT (118 aa). Residues 15–393 lie on the Virion surface side of the membrane; sequence VTPVTPYFGP…ESVDVISSSY (379 aa). Catalysis depends on S37, which acts as the Nucleophile. Cysteines 41 and 57 form a disulfide. N-linked (GlcNAc...) asparagine; by host glycosylation is found at N59 and N76. 5 disulfides stabilise this stretch: C88–C136, C108–C156, C192–C273, C200–C246, and C206–C213. The segment at 122–263 is receptor binding; that stretch reads SFNIKLNQMA…GTHNASIVGN (142 aa). 3 N-linked (GlcNAc...) asparagine; by host glycosylation sites follow: N257, N278, and N294. The segment at 264 to 379 is esterase domain second part; the sequence is FLFYPTKSYC…SCPQYVKLFD (116 aa). The cysteines at positions 304 and 309 are disulfide-linked. An N-linked (GlcNAc...) asparagine; by host glycan is attached at N322. Residue H328 is the Charge relay system of the active site. Residue N343 is glycosylated (N-linked (GlcNAc...) asparagine; by host). Cysteines 346 and 371 form a disulfide. The chain crosses the membrane as a helical span at residues 394–414; it reads FVATWVLLVVVVILIFVIISF. The Intravirion segment spans residues 415-416; sequence FC.

This sequence belongs to the influenza type C/coronaviruses hemagglutinin-esterase family. In terms of assembly, homodimer. Post-translationally, N-glycosylated.

The protein resides in the virion membrane. Its subcellular location is the host cell membrane. The enzyme catalyses N-acetyl-9-O-acetylneuraminate + H2O = N-acetylneuraminate + acetate + H(+). It carries out the reaction N-acetyl-4-O-acetylneuraminate + H2O = N-acetylneuraminate + acetate + H(+). Its function is as follows. Structural protein that makes short spikes at the surface of the virus. Contains receptor binding and receptor-destroying activities. Mediates de-O-acetylation of N-acetyl-9-O-acetylneuraminic acid, which is probably the receptor determinant recognized by the virus on the surface of erythrocytes and susceptible cells. This receptor-destroying activity is important for virus release as it probably helps preventing self-aggregation and ensures the efficient spread of the progeny virus from cell to cell. May serve as a secondary viral attachment protein for initiating infection, the spike protein being the major one. Seems to be a 'luxury' protein that is not absolutely necessary for virus infection in culture. However, its presence in the virus may alter its pathogenicity. May become a target for both the humoral and the cellular branches of the immune system. The polypeptide is Hemagglutinin-esterase (HE) (Homo sapiens (Human)).